The chain runs to 68 residues: Large ribosomal subunit protein uL29 (68 aa).

The protein belongs to the universal ribosomal protein uL29 family.

This Persephonella marina (strain DSM 14350 / EX-H1) protein is Large ribosomal subunit protein uL29.